The chain runs to 337 residues: Tert-butanol monooxygenase / tert-amyl alcohol desaturase reductase subunit (337 aa).

The region spanning K9–I114 is the FAD-binding FR-type domain. One can recognise a 2Fe-2S ferredoxin-type domain in the interval F254 to L337. Positions 288, 293, 296, and 324 each coordinate [2Fe-2S] cluster.

Belongs to the PDR/VanB family. As to quaternary structure, this two-component enzyme is composed of an oxygenase (MdpJ) and a reductase (MdpK). It depends on [2Fe-2S] cluster as a cofactor.

In terms of biological role, reductase component of a two-component system involved in the degradation of tertiary alcohols such as tert-butyl alcohol (TBA) and tert-amyl alcohol (TAA). MdpK probably provides electrons via its [2Fe-2S] iron-sulfur cluster to the MdpJ oxygenase subunit. This is Tert-butanol monooxygenase / tert-amyl alcohol desaturase reductase subunit from Aquincola tertiaricarbonis.